The following is a 420-amino-acid chain: MAEVKVPELAESITEGTIAEWLKNVGDNVDKGEAILELETDKVNVEVVSEEAGVLSEQLAEEGDTVEVGQAVAVVGEGQVNTSNDSSNESSQKDEAKEKETPKQSNPNSSESENTQDNSQQRINATPSARRHARKNGVDLSEVSGKGNDVLRKDDVENSQKSSSQTAKSESKSQNSGSKQTNNNPSKPVIREKMSRRKKTAAKKLLEVSNQTAMLTTFNEVDMTNVMDLRKRKKEQFIKDHDGTKLGFMSFFTKAAVAALKKYPEVNAEIDGDDMITKQFYDIGIAVSTDDGLLVPFVRDCDKKNFAEIEQEIANLAVKARDKKLGLDDMVNGSFTITNGGIFGSMMSTPIINGNQAAILGMHSIITRPIAVDKDTIENRPMMYIALSYDHRIIDGKEAVGFLKTIKELIENPEDLLLES.

Residues 1 to 76 enclose the Lipoyl-binding domain; that stretch reads MAEVKVPELA…EVGQAVAVVG (76 aa). At K42 the chain carries N6-lipoyllysine. The tract at residues 75–199 is disordered; sequence VGEGQVNTSN…IREKMSRRKK (125 aa). Over residues 81-90 the composition is skewed to polar residues; it reads NTSNDSSNES. Basic and acidic residues predominate over residues 91–102; the sequence is SQKDEAKEKETP. Residues 103 to 127 are compositionally biased toward polar residues; it reads KQSNPNSSESENTQDNSQQRINATP. The region spanning 124–160 is the Peripheral subunit-binding (PSBD) domain; sequence NATPSARRHARKNGVDLSEVSGKGNDVLRKDDVENSQ. Positions 149 to 158 are enriched in basic and acidic residues; sequence DVLRKDDVEN. Residues 159 to 174 are compositionally biased toward low complexity; that stretch reads SQKSSSQTAKSESKSQ. Over residues 175–186 the composition is skewed to polar residues; sequence NSGSKQTNNNPS. Residues H391 and D395 contribute to the active site.

This sequence belongs to the 2-oxoacid dehydrogenase family. In terms of assembly, forms a 24-polypeptide structural core with octahedral symmetry. Part of the 2-oxoglutarate dehydrogenase (OGDH) complex composed of E1 (2-oxoglutarate dehydrogenase), E2 (dihydrolipoamide succinyltransferase) and E3 (dihydrolipoamide dehydrogenase); the complex contains multiple copies of the three enzymatic components (E1, E2 and E3). The cofactor is (R)-lipoate.

It carries out the reaction N(6)-[(R)-dihydrolipoyl]-L-lysyl-[protein] + succinyl-CoA = N(6)-[(R)-S(8)-succinyldihydrolipoyl]-L-lysyl-[protein] + CoA. The protein operates within amino-acid degradation; L-lysine degradation via saccharopine pathway; glutaryl-CoA from L-lysine: step 6/6. In terms of biological role, E2 component of the 2-oxoglutarate dehydrogenase (OGDH) complex which catalyzes the second step in the conversion of 2-oxoglutarate to succinyl-CoA and CO(2). The protein is Dihydrolipoyllysine-residue succinyltransferase component of 2-oxoglutarate dehydrogenase complex (odhB) of Staphylococcus epidermidis (strain ATCC 35984 / DSM 28319 / BCRC 17069 / CCUG 31568 / BM 3577 / RP62A).